The primary structure comprises 450 residues: Bifunctional protein GlmU (450 aa).

A pyrophosphorylase region spans residues 1–228; sequence MKTALVILAA…ESETLGINSR (228 aa). UDP-N-acetyl-alpha-D-glucosamine is bound by residues 8-11, Lys22, Gln75, and 80-81; these read LAAG and GT. Asp105 is a Mg(2+) binding site. Residues Gly140, Glu154, Asn169, and Asn226 each coordinate UDP-N-acetyl-alpha-D-glucosamine. Asn226 contributes to the Mg(2+) binding site. The linker stretch occupies residues 229–249; the sequence is TELSAAEAAFQERARTNAFEN. The segment at 250-450 is N-acetyltransferase; that stretch reads GVTLPAPGTV…AKKAKQQRGS (201 aa). Arg315 and Lys333 together coordinate UDP-N-acetyl-alpha-D-glucosamine. The active-site Proton acceptor is the His345. UDP-N-acetyl-alpha-D-glucosamine-binding residues include Tyr348 and Asn359. Residues Ala362, 368-369, Ser387, Ser405, and Arg422 contribute to the acetyl-CoA site; that span reads NY.

In the N-terminal section; belongs to the N-acetylglucosamine-1-phosphate uridyltransferase family. It in the C-terminal section; belongs to the transferase hexapeptide repeat family. Homotrimer. Mg(2+) is required as a cofactor.

The protein localises to the cytoplasm. The catalysed reaction is alpha-D-glucosamine 1-phosphate + acetyl-CoA = N-acetyl-alpha-D-glucosamine 1-phosphate + CoA + H(+). It carries out the reaction N-acetyl-alpha-D-glucosamine 1-phosphate + UTP + H(+) = UDP-N-acetyl-alpha-D-glucosamine + diphosphate. It participates in nucleotide-sugar biosynthesis; UDP-N-acetyl-alpha-D-glucosamine biosynthesis; N-acetyl-alpha-D-glucosamine 1-phosphate from alpha-D-glucosamine 6-phosphate (route II): step 2/2. It functions in the pathway nucleotide-sugar biosynthesis; UDP-N-acetyl-alpha-D-glucosamine biosynthesis; UDP-N-acetyl-alpha-D-glucosamine from N-acetyl-alpha-D-glucosamine 1-phosphate: step 1/1. The protein operates within bacterial outer membrane biogenesis; LPS lipid A biosynthesis. In terms of biological role, catalyzes the last two sequential reactions in the de novo biosynthetic pathway for UDP-N-acetylglucosamine (UDP-GlcNAc). The C-terminal domain catalyzes the transfer of acetyl group from acetyl coenzyme A to glucosamine-1-phosphate (GlcN-1-P) to produce N-acetylglucosamine-1-phosphate (GlcNAc-1-P), which is converted into UDP-GlcNAc by the transfer of uridine 5-monophosphate (from uridine 5-triphosphate), a reaction catalyzed by the N-terminal domain. The protein is Bifunctional protein GlmU of Roseobacter denitrificans (strain ATCC 33942 / OCh 114) (Erythrobacter sp. (strain OCh 114)).